The primary structure comprises 616 residues: Spastin (616 aa).

A disordered region spans residues 1–43 (MNSPGGRGKKKGSGGASNPVPPRPPPPCLAPAPPAAGPAPPPE). Positions 1–50 (MNSPGGRGKKKGSGGASNPVPPRPPPPCLAPAPPAAGPAPPPESPHKRNL) are required for nuclear localization. At 1 to 56 (MNSPGGRGKKKGSGGASNPVPPRPPPPCLAPAPPAAGPAPPPESPHKRNLYYFSYP) the chain is on the cytoplasmic side. Positions 1–80 (MNSPGGRGKK…LGLLFVWLCQ (80 aa)) are required for interaction with ATL1. The segment at 1–194 (MNSPGGRGKK…LVMAKDRLQL (194 aa)) is required for midbody localization. The required for interaction with RTN1 stretch occupies residues 1 to 300 (MNSPGGRGKK…GTPKTNRTNK (300 aa)). The Nuclear localization signal signature appears at 4 to 11 (PGGRGKKK). A compositionally biased stretch (pro residues) spans 19–43 (PVPPRPPPPCLAPAPPAAGPAPPPE). Residues 50–87 (LYYFSYPLFVGFALLRLVAFHLGLLFVWLCQRFSRALM) form a required for interaction with SSNA1 and microtubules region. Positions 57-77 (LFVGFALLRLVAFHLGLLFVW) form an intramembrane region, helical. Residues 59–67 (VGFALLRLV) carry the Nuclear export signal motif. Over 78–616 (LCQRFSRALM…WNKDFGDTTV (539 aa)) the chain is Cytoplasmic. The interval 112 to 196 (EAERVRVFHK…MAKDRLQLLE (85 aa)) is sufficient for interaction with CHMP1B. Residues 114-200 (ERVRVFHKQA…RLQLLEKMQP (87 aa)) are required for interaction with microtubules. Positions 120-195 (HKQAFEYISI…VMAKDRLQLL (76 aa)) constitute an MIT domain. Positions 224-266 (HLQSESGAVPKRKDPLTHTSNSLPRSKTVMKTGSAGLSGHHRA) are disordered. The tract at residues 228 to 616 (ESGAVPKRKD…WNKDFGDTTV (389 aa)) is sufficient for microtubule severing. Residues 240 to 254 (THTSNSLPRSKTVMK) are compositionally biased toward polar residues. Phosphoserine occurs at positions 245 and 268. Residues 270–328 (SGLSMVSGVKQGSGPAPTTHKGTPKTNRTNKPSTPTTATRKKKDLKNFRNVDSNLANLI) are required for interaction with microtubules and microtubule severing. The interval 278–312 (VKQGSGPAPTTHKGTPKTNRTNKPSTPTTATRKKK) is disordered. The segment covering 289–307 (HKGTPKTNRTNKPSTPTTA) has biased composition (polar residues). Threonine 306 carries the post-translational modification Phosphothreonine. The short motif at 309–312 (RKKK) is the Nuclear localization signal element. Positions 310 to 312 (KKK) are required for interaction with microtubules. Position 382-389 (382-389 (GPPGNGKT)) interacts with ATP. Serine 597 is modified (phosphoserine).

Belongs to the AAA ATPase family. Spastin subfamily. As to quaternary structure, homohexamer. Mostly monomeric, but assembles into hexameric structure for short periods of time. Oligomerization seems to be a prerequisite for catalytic activity. Binding to ATP in a cleft between two adjacent subunits stabilizes the homohexameric form. Binds to microtubules at least in part via the alpha-tubulin and beta-tubulin tails. The hexamer adopts a ring conformation through which microtubules pass prior to being severed. Does not interact strongly with tubulin heterodimers. Interacts (via MIT domain) with CHMP1B; the interaction is direct. Interacts with SSNA1. Interacts with ATL1. Interacts with RTN1. Interacts with ZFYVE27. Isoform 1 but not isoform 3 interacts with RTN2. Interacts with REEP1. Interacts (via MIT domain) with IST1. As to expression, expressed in brain, heart, kidney, liver, lung, pancreas, placenta and skeletal muscle. The short isoforms may predominate in brain and spinal cord.

Its subcellular location is the membrane. It is found in the endoplasmic reticulum. It localises to the midbody. The protein resides in the cytoplasm. The protein localises to the cytoskeleton. Its subcellular location is the microtubule organizing center. It is found in the centrosome. It localises to the perinuclear region. The protein resides in the nucleus. The protein localises to the spindle. Its subcellular location is the cell projection. It is found in the axon. It localises to the endoplasmic reticulum membrane. The protein resides in the nucleus membrane. The protein localises to the lipid droplet. Its subcellular location is the endosome. It carries out the reaction n ATP + n H2O + a microtubule = n ADP + n phosphate + (n+1) alpha/beta tubulin heterodimers.. Allosteric enzyme with a cooperative mechanism; at least two neighbor subunits influence each other strongly in spastin hexamers. Microtubule binding promotes cooperative interactions among spastin subunits. ATP-bound enzyme interacts strongly and cooperatively with microtubules; this interaction stimulates ATP hydrolysis. Functionally, ATP-dependent microtubule severing protein that specifically recognizes and cuts microtubules that are polyglutamylated. Preferentially recognizes and acts on microtubules decorated with short polyglutamate tails: severing activity increases as the number of glutamates per tubulin rises from one to eight, but decreases beyond this glutamylation threshold. Severing activity is not dependent on tubulin acetylation or detyrosination. Microtubule severing promotes reorganization of cellular microtubule arrays and the release of microtubules from the centrosome following nucleation. It is critical for the biogenesis and maintenance of complex microtubule arrays in axons, spindles and cilia. SPAST is involved in abscission step of cytokinesis and nuclear envelope reassembly during anaphase in cooperation with the ESCRT-III complex. Recruited at the midbody, probably by IST1, and participates in membrane fission during abscission together with the ESCRT-III complex. Recruited to the nuclear membrane by IST1 and mediates microtubule severing, promoting nuclear envelope sealing and mitotic spindle disassembly during late anaphase. Required for membrane traffic from the endoplasmic reticulum (ER) to the Golgi and endosome recycling. Recruited by IST1 to endosomes and regulates early endosomal tubulation and recycling by mediating microtubule severing. Probably plays a role in axon growth and the formation of axonal branches. Its function is as follows. Involved in lipid metabolism by regulating the size and distribution of lipid droplets. This Homo sapiens (Human) protein is Spastin.